The primary structure comprises 1184 residues: Nucleolar protein 6 (1184 aa).

Over residues 1–10 (MGRIKEKESK) the composition is skewed to basic and acidic residues. 2 disordered regions span residues 1–42 (MGRI…NRVP) and 1133–1184 (REQR…NALC).

It belongs to the NRAP family. Part of the small subunit (SSU) processome, composed of more than 70 proteins and the RNA chaperone small nucleolar RNA (snoRNA) U3.

Its subcellular location is the nucleus. It localises to the nucleolus. The protein resides in the chromosome. Its function is as follows. Part of the small subunit (SSU) processome, first precursor of the small eukaryotic ribosomal subunit. During the assembly of the SSU processome in the nucleolus, many ribosome biogenesis factors, an RNA chaperone and ribosomal proteins associate with the nascent pre-rRNA and work in concert to generate RNA folding, modifications, rearrangements and cleavage as well as targeted degradation of pre-ribosomal RNA by the RNA exosome. This chain is Nucleolar protein 6, found in Drosophila virilis (Fruit fly).